The primary structure comprises 401 residues: Imidazolonepropionase (401 aa).

The Fe(3+) site is built by H66 and H68. Residues H66 and H68 each coordinate Zn(2+). Residues R75, Y138, and H171 each coordinate 4-imidazolone-5-propanoate. Y138 contributes to the N-formimidoyl-L-glutamate binding site. Position 236 (H236) interacts with Fe(3+). H236 provides a ligand contact to Zn(2+). Position 239 (Q239) interacts with 4-imidazolone-5-propanoate. Residue D311 coordinates Fe(3+). Residue D311 coordinates Zn(2+). Residues N313 and G315 each contribute to the N-formimidoyl-L-glutamate site. T316 serves as a coordination point for 4-imidazolone-5-propanoate.

It belongs to the metallo-dependent hydrolases superfamily. HutI family. The cofactor is Zn(2+). It depends on Fe(3+) as a cofactor.

Its subcellular location is the cytoplasm. It catalyses the reaction 4-imidazolone-5-propanoate + H2O = N-formimidoyl-L-glutamate. It functions in the pathway amino-acid degradation; L-histidine degradation into L-glutamate; N-formimidoyl-L-glutamate from L-histidine: step 3/3. Catalyzes the hydrolytic cleavage of the carbon-nitrogen bond in imidazolone-5-propanoate to yield N-formimidoyl-L-glutamate. It is the third step in the universal histidine degradation pathway. The sequence is that of Imidazolonepropionase from Pseudomonas putida (strain ATCC 700007 / DSM 6899 / JCM 31910 / BCRC 17059 / LMG 24140 / F1).